Reading from the N-terminus, the 220-residue chain is Dual specificity protein phosphatase 19 (220 aa).

Methionine 1 carries the N-acetylmethionine modification. Residues glutamine 64–serine 205 form the Tyrosine-protein phosphatase domain. Catalysis depends on cysteine 149, which acts as the Phosphocysteine intermediate.

It belongs to the protein-tyrosine phosphatase family. Non-receptor class dual specificity subfamily.

The catalysed reaction is O-phospho-L-tyrosyl-[protein] + H2O = L-tyrosyl-[protein] + phosphate. It catalyses the reaction O-phospho-L-seryl-[protein] + H2O = L-seryl-[protein] + phosphate. The enzyme catalyses O-phospho-L-threonyl-[protein] + H2O = L-threonyl-[protein] + phosphate. Its activity is regulated as follows. Phosphatase activity is enhanced by Ca(2+) and Mn(2+). Its function is as follows. Has a dual specificity toward Ser/Thr and Tyr-containing proteins. The chain is Dual specificity protein phosphatase 19 from Mus musculus (Mouse).